Here is a 550-residue protein sequence, read N- to C-terminus: Tyrosinase HcTyr2 (550 aa).

Residues His-56, His-84, His-93, His-282, His-286, and His-326 each coordinate Cu cation.

Belongs to the tyrosinase family. It depends on Cu(2+) as a cofactor.

It carries out the reaction L-tyrosine + O2 = L-dopaquinone + H2O. The catalysed reaction is 2 L-tyrosine + O2 = 2 L-dopa. The enzyme catalyses 2 L-dopa + O2 = 2 L-dopaquinone + 2 H2O. Its function is as follows. Copper-containing oxidase that catalyzes the conversion of L-tyrosine to L-dopa and then to L-dopaquinone. Can use various phenols such as p-coumaric acid, phenol, pyrocatechol, syringol or pyrogallol. Accepts several of the constituents of lignin and potentially participates in lignin functionalization. The protein is Tyrosinase HcTyr2 of Hahella sp. (strain CCB-MM4).